Consider the following 1302-residue polypeptide: Multidrug resistance protein 1 (1302 aa).

Residues 43–63 (GVFEIILLIIGIIGSIGVGCL) form a helical membrane-spanning segment. Residues 51–360 (IIGIIGSIGV…ISTPINILNS (310 aa)) enclose the ABC transmembrane type-1 1 domain. An N-linked (GlcNAc...) asparagine glycan is attached at asparagine 83. 5 consecutive transmembrane segments (helical) span residues 118–138 (LYFA…FFVL), 192–212 (LFQT…KCWD), 213–233 (LTLV…GLGM), 292–312 (IGIG…NALG), and 331–351 (AGTV…LSQI). One can recognise an ABC transporter 1 domain in the interval 395–634 (IRFEDVQFVY…KGTYYGLVKR (240 aa)). 430-437 (GASGCGKS) contacts ATP. N-linked (GlcNAc...) asparagine glycosylation occurs at asparagine 663. The chain crosses the membrane as a helical span at residues 712–732 (YIFCTLGLIGGIGAGAAFPFY). In terms of domain architecture, ABC transmembrane type-1 2 spans 713–1022 (IFCTLGLIGG…IGNVLPDVGK (310 aa)). The N-linked (GlcNAc...) asparagine glycan is linked to asparagine 751. The chain crosses the membrane as a helical span at residues 765–785 (MIIICIGIITMISFFCYVGLF). A glycan (N-linked (GlcNAc...) asparagine) is linked at asparagine 808. 2 consecutive transmembrane segments (helical) span residues 841-861 (VGDI…GLYF) and 862-882 (SWKL…FMFI). The ABC transporter 2 domain maps to 1057–1296 (IEFKNIHFRY…KGFYYTLAMQ (240 aa)). ATP is bound at residue 1092–1099 (GASGCGKS).

Belongs to the ABC transporter superfamily. ABCB family. Multidrug resistance exporter (TC 3.A.1.201) subfamily.

It localises to the membrane. It catalyses the reaction ATP + H2O + xenobioticSide 1 = ADP + phosphate + xenobioticSide 2.. In terms of biological role, energy-dependent efflux pump responsible for decreased drug accumulation in multidrug resistance parasites. This is Multidrug resistance protein 1 from Entamoeba histolytica (strain ATCC 30459 / HM-1:IMSS / ABRM).